Consider the following 248-residue polypeptide: Tabinhibitin 10 (248 aa).

Positions methionine 1 to alanine 22 are cleaved as a signal peptide. In terms of domain architecture, SCP spans leucine 66–leucine 208. The Cell attachment site motif lies at arginine 221–aspartate 223.

The protein belongs to the CRISP family. As to expression, expressed in salivary glands.

The protein resides in the secreted. Its function is as follows. Inhibits platelet aggregation induced by all agonists tested (ADP, arachidonic acid, the thromboxane A2 analog U46619, thrombin, and snake venom snaclecs (TMVA that activates platelet through GPIB, and stejnulxin that specifically acts through GPVI (GP6))). May act by competing with fibrinogen for binding to glycoprotein IIb/IIIa (ITGA2B/ITGB3). The protein is Tabinhibitin 10 of Tabanus yao (Horsefly).